Reading from the N-terminus, the 155-residue chain is Deoxyuridine 5'-triphosphate nucleotidohydrolase (155 aa).

Substrate contacts are provided by residues 71 to 73 (RSG), N84, 88 to 90 (TID), and K98.

Belongs to the dUTPase family. It depends on Mg(2+) as a cofactor.

The enzyme catalyses dUTP + H2O = dUMP + diphosphate + H(+). It participates in pyrimidine metabolism; dUMP biosynthesis; dUMP from dCTP (dUTP route): step 2/2. Functionally, this enzyme is involved in nucleotide metabolism: it produces dUMP, the immediate precursor of thymidine nucleotides and it decreases the intracellular concentration of dUTP so that uracil cannot be incorporated into DNA. The chain is Deoxyuridine 5'-triphosphate nucleotidohydrolase from Corynebacterium jeikeium (strain K411).